The following is a 143-amino-acid chain: Peptide methionine sulfoxide reductase MsrB (143 aa).

Positions 16–139 (DAELRRRLTP…NSAALNFESR (124 aa)) constitute a MsrB domain. Zn(2+)-binding residues include cysteine 55, cysteine 58, cysteine 104, and cysteine 107. Cysteine 128 serves as the catalytic Nucleophile.

The protein belongs to the MsrB Met sulfoxide reductase family. The cofactor is Zn(2+).

The enzyme catalyses L-methionyl-[protein] + [thioredoxin]-disulfide + H2O = L-methionyl-(R)-S-oxide-[protein] + [thioredoxin]-dithiol. The protein is Peptide methionine sulfoxide reductase MsrB of Burkholderia ambifaria (strain ATCC BAA-244 / DSM 16087 / CCUG 44356 / LMG 19182 / AMMD) (Burkholderia cepacia (strain AMMD)).